The primary structure comprises 88 residues: MARSLKKGPFVDENLFKKVTSAKDGEVIKTWSRRSTIFPEFIGKTFGVYNGKEFIPVYITEDMVGNKLGEFAPTRKFGGHGDDKGKKK.

This sequence belongs to the universal ribosomal protein uS19 family.

Protein S19 forms a complex with S13 that binds strongly to the 16S ribosomal RNA. In Mycoplasma capricolum subsp. capricolum (strain California kid / ATCC 27343 / NCTC 10154), this protein is Small ribosomal subunit protein uS19 (rpsS).